We begin with the raw amino-acid sequence, 1004 residues long: Ephrin type-B receptor 2 (1004 aa).

An N-terminal signal peptide occupies residues 1-19 (MGPLWFCCLPLALLPLLAA). Over 20 to 544 (VEETLMDSTT…QTSVQEKLPL (525 aa)) the chain is Extracellular. Positions 21–203 (EETLMDSTTA…FYRKCPRVIQ (183 aa)) constitute an Eph LBD domain. Disulfide bonds link C63–C185 and C98–C108. N-linked (GlcNAc...) asparagine glycans are attached at residues N266, N337, N429, N478, and N483. 2 Fibronectin type-III domains span residues 325-435 (IPSA…TNQA) and 436-531 (APSA…TMTE). Residues 545–565 (IIGSSAAGLVFLIAVVVIIIV) traverse the membrane as a helical segment. The Cytoplasmic portion of the chain corresponds to 566-1004 (CNRRRGFERA…QMNQIQSVEV (439 aa)). Residues 639–902 (VKIEQVIGAG…QIVNTLDKMI (264 aa)) form the Protein kinase domain. Residues 645–653 (IGAGEFGEV) and K671 each bind ATP. D764 acts as the Proton acceptor in catalysis. Positions 931-995 (TSFNTVDEWL…LNSIQVMRAQ (65 aa)) constitute an SAM domain. The PDZ-binding motif lies at 1002–1004 (VEV).

This sequence belongs to the protein kinase superfamily. Tyr protein kinase family. Ephrin receptor subfamily. Heterotetramer upon binding of the ligand. The heterotetramer is composed of an ephrin dimer and a receptor dimer. Oligomerization is probably required to induce biological responses. Post-translationally, ligand binding induces cleavage by matrix metalloproteinases (MMPs) such as MMP7/MMP9, producing an EphB2/N-terminal fragment (NTF) and a C-terminal long fragment (EphB2-LF). EphB2-LF is further cleaved by MMPs, producing EphB2/CTF1 which is further cleaved by the PS1/gamma-secretase producing EphB2/CTF2. In terms of tissue distribution, wide tissue distribution throughout development and sustained expression in adult brain. The longer form (CEK5+) is specifically expressed in the central nervous system.

It is found in the cell membrane. Its subcellular location is the cell projection. The protein localises to the axon. The protein resides in the dendrite. It catalyses the reaction L-tyrosyl-[protein] + ATP = O-phospho-L-tyrosyl-[protein] + ADP + H(+). Receptor tyrosine kinase which binds promiscuously transmembrane ephrin-B family ligands residing on adjacent cells, leading to contact-dependent bidirectional signaling into neighboring cells. The signaling pathway downstream of the receptor is referred to as forward signaling while the signaling pathway downstream of the ephrin ligand is referred to as reverse signaling. Functions in axon guidance during development. In addition to axon guidance, also regulates dendritic spines development and maturation and stimulates the formation of excitatory synapses. This Gallus gallus (Chicken) protein is Ephrin type-B receptor 2 (EPHB2).